Here is a 340-residue protein sequence, read N- to C-terminus: Lipopolysaccharide core biosynthesis glycosyltransferase LpsE (340 aa).

The protein belongs to the glycosyltransferase group 1 family. Glycosyltransferase 4 subfamily.

It participates in bacterial outer membrane biogenesis; LPS core biosynthesis. This is Lipopolysaccharide core biosynthesis glycosyltransferase LpsE (lpsE) from Rhizobium meliloti (strain 1021) (Ensifer meliloti).